Here is a 159-residue protein sequence, read N- to C-terminus: Flagellar assembly factor FliW (159 aa).

The protein belongs to the FliW family. Interacts with translational regulator CsrA and flagellin(s).

The protein localises to the cytoplasm. Its function is as follows. Acts as an anti-CsrA protein, binds CsrA and prevents it from repressing translation of its target genes, one of which is flagellin. Binds to flagellin and participates in the assembly of the flagellum. The polypeptide is Flagellar assembly factor FliW (Geobacter sulfurreducens (strain ATCC 51573 / DSM 12127 / PCA)).